A 210-amino-acid polypeptide reads, in one-letter code: Na(+)-translocating NADH-quinone reductase subunit D (210 aa).

5 helical membrane passes run 42 to 62, 72 to 92, 103 to 123, 131 to 151, and 178 to 198; these read FVMT…VSLI, IIVQ…VLKA, VFVG…AFAM, LIDG…VGFF, and NGLM…IWVI.

This sequence belongs to the NqrDE/RnfAE family. Composed of six subunits; NqrA, NqrB, NqrC, NqrD, NqrE and NqrF.

It is found in the cell inner membrane. It catalyses the reaction a ubiquinone + n Na(+)(in) + NADH + H(+) = a ubiquinol + n Na(+)(out) + NAD(+). Its function is as follows. NQR complex catalyzes the reduction of ubiquinone-1 to ubiquinol by two successive reactions, coupled with the transport of Na(+) ions from the cytoplasm to the periplasm. NqrA to NqrE are probably involved in the second step, the conversion of ubisemiquinone to ubiquinol. This is Na(+)-translocating NADH-quinone reductase subunit D from Vibrio campbellii (strain ATCC BAA-1116).